Here is a 1633-residue protein sequence, read N- to C-terminus: Laminin-like protein lam-2 (1633 aa).

The signal sequence occupies residues M1 to P19. The Laminin N-terminal domain occupies Q47–R286. 2 N-linked (GlcNAc...) asparagine glycosylation sites follow: N116 and N136. Intrachain disulfides connect C287–C296, C289–C310, C312–C321, C324–C344, C347–C356, C349–C372, C375–C384, C387–C400, C403–C415, C405–C421, C423–C432, C435–C447, C450–C464, C452–C471, C473–C482, and C485–C500. Laminin EGF-like domains follow at residues C287–A346, C347–A402, C403–N449, and C450–P502. N348 carries N-linked (GlcNAc...) asparagine glycosylation. In terms of domain architecture, Laminin EGF-like 5; first part spans C503 to C512. 3 N-linked (GlcNAc...) asparagine glycosylation sites follow: N522, N658, and N740. Residues Q529 to H701 form the Laminin IV type A domain. In terms of domain architecture, Laminin EGF-like 5; second part spans C702–A747. 23 cysteine pairs are disulfide-bonded: C736–C745, C738–C752, C754–C763, C766–C782, C785–C803, C806–C815, C818–C832, C835–C849, C837–C856, C859–C868, C871–C887, C890–C909, C892–C916, C918–C927, C930–C943, C946–C958, C948–C965, C967–C976, C979–C991, C994–C1006, C996–C1013, C1015–C1024, and C1027–C1038. The 33-residue stretch at C752–K784 folds into the Laminin EGF-like 6; truncated domain. Laminin EGF-like domains follow at residues C785–E834, C835–S889, C890–E945, C946–P993, and C994–P1040. N-linked (GlcNAc...) asparagine glycosylation occurs at N936. 7 N-linked (GlcNAc...) asparagine glycosylation sites follow: N1077, N1183, N1226, N1259, N1336, N1452, and N1528.

Functionally, during the formation of neuromuscular junctions at the larval stage, negatively regulates membrane protrusion from body wall muscles, probably downstream of the integrin complex formed by pat-2 and pat-3. In Caenorhabditis elegans, this protein is Laminin-like protein lam-2 (lam-2).